A 319-amino-acid polypeptide reads, in one-letter code: MDRLIRSLLMNQNKQATDKLDHPDTSETVNISSLALLKMLRHARSGIPLEVMGLMLGDFVDDYTINVTDVFAMPQSGTSVTVESVDPVYQTKHMDLLKLVGRTENVVGWYHSHPGFGCWLSSVDVNTQQSFEALHPRAVAVVVDPIQSVKGKVMLDAFRSVNPLNLQIRPLAPTAEPRQTTSNLGHLTKPSLISVVHGLGTKYYSLNVAYRMGSNEQKMLMCLNKKSWYDQLNMSTYSELEKKQEEKFKSINKLIAVFNKDIDEVKEKPIADKKGKTQEEVKKFGKINAKQQLQMITSSLLNDSLCHQLTAMINAKSMT.

Positions Val29–Leu164 constitute an MPN domain. Zn(2+) contacts are provided by His111, His113, and Asp124. The JAMM motif signature appears at His111–Asp124.

Belongs to the peptidase M67A family.

This is an uncharacterized protein from Caenorhabditis elegans.